Consider the following 610-residue polypeptide: Dihydroxy-acid dehydratase (610 aa).

D81 lines the Mg(2+) pocket. [2Fe-2S] cluster is bound at residue C122. Residues D123 and K124 each contribute to the Mg(2+) site. K124 carries the post-translational modification N6-carboxylysine. C193 provides a ligand contact to [2Fe-2S] cluster. Residue E489 participates in Mg(2+) binding. Residue S515 is the Proton acceptor of the active site.

The protein belongs to the IlvD/Edd family. In terms of assembly, homodimer. [2Fe-2S] cluster serves as cofactor. Mg(2+) is required as a cofactor.

It catalyses the reaction (2R)-2,3-dihydroxy-3-methylbutanoate = 3-methyl-2-oxobutanoate + H2O. The catalysed reaction is (2R,3R)-2,3-dihydroxy-3-methylpentanoate = (S)-3-methyl-2-oxopentanoate + H2O. It functions in the pathway amino-acid biosynthesis; L-isoleucine biosynthesis; L-isoleucine from 2-oxobutanoate: step 3/4. The protein operates within amino-acid biosynthesis; L-valine biosynthesis; L-valine from pyruvate: step 3/4. Functionally, functions in the biosynthesis of branched-chain amino acids. Catalyzes the dehydration of (2R,3R)-2,3-dihydroxy-3-methylpentanoate (2,3-dihydroxy-3-methylvalerate) into 2-oxo-3-methylpentanoate (2-oxo-3-methylvalerate) and of (2R)-2,3-dihydroxy-3-methylbutanoate (2,3-dihydroxyisovalerate) into 2-oxo-3-methylbutanoate (2-oxoisovalerate), the penultimate precursor to L-isoleucine and L-valine, respectively. The chain is Dihydroxy-acid dehydratase from Xylella fastidiosa (strain 9a5c).